A 361-amino-acid polypeptide reads, in one-letter code: Probable mannose-1-phosphate guanylyltransferase 1 (361 aa).

The GDP-alpha-D-mannose site is built by leucine 6 and valine 7. Glycine 9, glycine 11, threonine 12, arginine 13, and lysine 23 together coordinate diphosphate. GDP-alpha-D-mannose contacts are provided by glycine 85, asparagine 109, aspartate 111, glycine 146, and asparagine 173.

The protein belongs to the transferase hexapeptide repeat family.

It catalyses the reaction alpha-D-mannose 1-phosphate + GTP + H(+) = GDP-alpha-D-mannose + diphosphate. Its pathway is nucleotide-sugar biosynthesis; GDP-alpha-D-mannose biosynthesis; GDP-alpha-D-mannose from alpha-D-mannose 1-phosphate (GTP route): step 1/1. In terms of biological role, catalyzes a reaction of the Smirnoff-Wheeler pathway, the major route to ascorbate biosynthesis in plants. In Oryza sativa subsp. japonica (Rice), this protein is Probable mannose-1-phosphate guanylyltransferase 1.